We begin with the raw amino-acid sequence, 459 residues long: O-phospho-L-seryl-tRNA:Cys-tRNA synthase 1 (459 aa).

Pyridoxal 5'-phosphate contacts are provided by residues 152–153 (AR), asparagine 257, and 280–282 (SGH). Position 283 is an N6-(pyridoxal phosphate)lysine (lysine 283).

It belongs to the SepCysS family. As to quaternary structure, homodimer. Interacts with SepRS. It depends on pyridoxal 5'-phosphate as a cofactor.

The enzyme catalyses O-phospho-L-seryl-tRNA(Cys) + hydrogen sulfide + H(+) = L-cysteinyl-tRNA(Cys) + phosphate. Functionally, converts O-phospho-L-seryl-tRNA(Cys) (Sep-tRNA(Cys)) to L-cysteinyl-tRNA(Cys) (Cys-tRNA(Cys)). This chain is O-phospho-L-seryl-tRNA:Cys-tRNA synthase 1, found in Methanococcoides burtonii (strain DSM 6242 / NBRC 107633 / OCM 468 / ACE-M).